A 697-amino-acid chain; its full sequence is SPX domain-containing membrane protein OsI_08463 (697 aa).

Positions 2–145 (VNFGKRLMAD…GYKFTDYYVS (144 aa)) constitute an SPX domain. 11 consecutive transmembrane segments (helical) span residues 247–267 (FMSL…TYII), 278–298 (LGAA…AQVF), 315–335 (LVFS…AYDV), 338–356 (LTVL…ARAV), 375–395 (AGFV…AGLL), 411–431 (LPGW…WISF), 513–533 (LLIY…SSVV), 544–564 (TVAM…VIVG), 576–596 (ILVA…RFTS), 604–624 (VSSA…NLSL), and 670–690 (LLNV…VATF).

Belongs to the major facilitator superfamily.

It is found in the membrane. This is SPX domain-containing membrane protein OsI_08463 from Oryza sativa subsp. indica (Rice).